We begin with the raw amino-acid sequence, 316 residues long: Adenine deaminase (316 aa).

The Zn(2+) site is built by His-14, His-16, and His-194. Glu-197 functions as the Proton donor in the catalytic mechanism. Residue Asp-275 coordinates Zn(2+). A substrate-binding site is contributed by Asp-276.

The protein belongs to the metallo-dependent hydrolases superfamily. Adenosine and AMP deaminases family. Adenine deaminase type 2 subfamily. Requires Zn(2+) as cofactor.

It carries out the reaction adenine + H2O + H(+) = hypoxanthine + NH4(+). Catalyzes the hydrolytic deamination of adenine to hypoxanthine. Plays an important role in the purine salvage pathway and in nitrogen catabolism. This is Adenine deaminase from Bordetella avium (strain 197N).